The sequence spans 287 residues: Ribosomal RNA small subunit methyltransferase A (287 aa).

S-adenosyl-L-methionine is bound by residues Asn28, Leu30, Gly55, Glu76, Asp101, and Asn125.

The protein belongs to the class I-like SAM-binding methyltransferase superfamily. rRNA adenine N(6)-methyltransferase family. RsmA subfamily.

Its subcellular location is the cytoplasm. The catalysed reaction is adenosine(1518)/adenosine(1519) in 16S rRNA + 4 S-adenosyl-L-methionine = N(6)-dimethyladenosine(1518)/N(6)-dimethyladenosine(1519) in 16S rRNA + 4 S-adenosyl-L-homocysteine + 4 H(+). Specifically dimethylates two adjacent adenosines (A1518 and A1519) in the loop of a conserved hairpin near the 3'-end of 16S rRNA in the 30S particle. May play a critical role in biogenesis of 30S subunits. This Alkaliphilus oremlandii (strain OhILAs) (Clostridium oremlandii (strain OhILAs)) protein is Ribosomal RNA small subunit methyltransferase A.